We begin with the raw amino-acid sequence, 420 residues long: Probable pectate lyase C (420 aa).

An N-terminal signal peptide occupies residues 1–20; sequence MKLSAPLLVSLAAFSQAVTA. 3 N-linked (GlcNAc...) asparagine glycosylation sites follow: N49, N165, and N202. Residue R205 is part of the active site. Positions 262 to 297 constitute an EF-hand domain; sequence NANFHGYVDNNYYDPDKDGQLDGSELGVSSSNYGGM. Residues D275, D277, D279, Q281, and E286 each contribute to the Ca(2+) site. The disordered stretch occupies residues 357–395; it reads ATMGGPGTLNGGTPAKDTDGDGIPDEAEKQLGTDPNTND. N394 is a glycosylation site (N-linked (GlcNAc...) asparagine).

It belongs to the polysaccharide lyase 1 family. Requires Ca(2+) as cofactor.

The protein resides in the secreted. The enzyme catalyses Eliminative cleavage of (1-&gt;4)-alpha-D-galacturonan to give oligosaccharides with 4-deoxy-alpha-D-galact-4-enuronosyl groups at their non-reducing ends.. Its function is as follows. Pectinolytic enzyme consist of four classes of enzymes: pectin lyase, polygalacturonase, pectin methylesterase and rhamnogalacturonase. Among pectinolytic enzymes, pectin lyase is the most important in depolymerization of pectin, since it cleaves internal glycosidic bonds of highly methylated pectins. Favors pectate, the anion, over pectin, the methyl ester. This is Probable pectate lyase C (plyC) from Neosartorya fischeri (strain ATCC 1020 / DSM 3700 / CBS 544.65 / FGSC A1164 / JCM 1740 / NRRL 181 / WB 181) (Aspergillus fischerianus).